Reading from the N-terminus, the 206-residue chain is MKVLGIDEAGRGPVIGPLVVAGVMIPERKFSILRKMGVKDSKKLTPERRRFLARKIRRIARVFTVKISASDIDRMRERGFNLNEIEKIAIKRIIPEAQPDRVIIDSVDVKPERLEEEIRSHFGEIEVTAEHGADTRYYPVAAASIIAKVERDLEIESIQKKNRKLGDIGSGYPSDPRTREFLESFTYDELPDFVRRSWATVQKKKQ.

The RNase H type-2 domain maps to 1–206 (MKVLGIDEAG…SWATVQKKKQ (206 aa)). A divalent metal cation-binding residues include D7, E8, and D105.

This sequence belongs to the RNase HII family. Mn(2+) serves as cofactor. The cofactor is Mg(2+).

The protein localises to the cytoplasm. It catalyses the reaction Endonucleolytic cleavage to 5'-phosphomonoester.. Functionally, endonuclease that specifically degrades the RNA of RNA-DNA hybrids. The polypeptide is Ribonuclease HII (rnhB) (Methanothermobacter thermautotrophicus (strain ATCC 29096 / DSM 1053 / JCM 10044 / NBRC 100330 / Delta H) (Methanobacterium thermoautotrophicum)).